The sequence spans 124 residues: UPF0738 protein ABC2521 (124 aa).

The protein belongs to the UPF0738 family.

The sequence is that of UPF0738 protein ABC2521 from Shouchella clausii (strain KSM-K16) (Alkalihalobacillus clausii).